A 400-amino-acid chain; its full sequence is Lysophospholipid transporter LplT (400 aa).

12 helical membrane passes run 19–39 (VIVA…ATLA), 53–73 (VLQM…GQIA), 91–111 (AGAA…LVGI), 139–159 (LMEA…GVLA), 164–184 (IAAL…NLFI), 195–213 (SWRL…VVLW), 227–247 (LFWG…PVAL), 257–277 (YLNA…AKLV), 281–301 (TVSR…IFSL), 304–324 (ALLP…FFVV), 352–372 (NSAM…GVPA), and 373–393 (VAIG…LWIW).

The protein belongs to the major facilitator superfamily. LplT (TC 2.A.1.42) family.

The protein resides in the cell inner membrane. Catalyzes the facilitated diffusion of 2-acyl-glycero-3-phosphoethanolamine (2-acyl-GPE) into the cell. This is Lysophospholipid transporter LplT from Salmonella newport (strain SL254).